The sequence spans 194 residues: Probable thymidylate kinase (194 aa).

ATP is bound at residue 7–14 (GIDGSGKT).

This sequence belongs to the thymidylate kinase family.

The catalysed reaction is dTMP + ATP = dTDP + ADP. This Methanothermobacter thermautotrophicus (strain ATCC 29096 / DSM 1053 / JCM 10044 / NBRC 100330 / Delta H) (Methanobacterium thermoautotrophicum) protein is Probable thymidylate kinase (tmk).